A 294-amino-acid polypeptide reads, in one-letter code: StAR-related lipid transfer protein 3 (294 aa).

The MENTAL domain maps to 1-66 (DGYICNNGMD…YSPPESLAGS (66 aa)). Positions 55–61 (QFYSPPE) match the FFAT motif. The disordered stretch occupies residues 58 to 77 (SPPESLAGSEEDLDEEGLGR). An START domain is found at 79–292 (AVSPQEKALV…LRQRIRDLRS (214 aa)).

This sequence belongs to the STARD3 family. In terms of assembly, homodimer. Post-translationally, phosphorylated. Phosphorylation allows the tethering of two membranes that participates in the formation of ER-endosome contacts. Phosphorylation of FFAT motif drives membrane tethering between the endoplasmic reticulum and late endosomes that in turn allows the efficient transport of sterol mediated by the START domain.

The protein resides in the late endosome membrane. It catalyses the reaction cholesterol(in) = cholesterol(out). Functionally, sterol-binding protein that mediates cholesterol transport from the endoplasmic reticulum to endosomes. The sterol transport mechanism is triggered by phosphorylation of FFAT motif that leads to membrane tethering between the endoplasmic reticulum and late endosomes. Acts as a lipid transfer protein that redirects sterol to the endosome at the expense of the cell membrane and favors membrane formation inside endosomes. The protein is StAR-related lipid transfer protein 3 of Salvelinus fontinalis (Brook trout).